Here is a 247-residue protein sequence, read N- to C-terminus: Triosephosphate isomerase (247 aa).

Residues Asn10 and Lys12 each coordinate substrate. His94 (electrophile) is an active-site residue. Residue Glu164 is the Proton acceptor of the active site.

The protein belongs to the triosephosphate isomerase family. As to quaternary structure, homodimer.

Its subcellular location is the cytoplasm. The enzyme catalyses D-glyceraldehyde 3-phosphate = dihydroxyacetone phosphate. It catalyses the reaction dihydroxyacetone phosphate = methylglyoxal + phosphate. Its pathway is carbohydrate biosynthesis; gluconeogenesis. It participates in carbohydrate degradation; glycolysis; D-glyceraldehyde 3-phosphate from glycerone phosphate: step 1/1. Triosephosphate isomerase is an extremely efficient metabolic enzyme that catalyzes the interconversion between dihydroxyacetone phosphate (DHAP) and D-glyceraldehyde-3-phosphate (G3P) in glycolysis and gluconeogenesis. In terms of biological role, it is also responsible for the non-negligible production of methylglyoxal a reactive cytotoxic side-product that modifies and can alter proteins, DNA and lipids. In Latimeria chalumnae (Coelacanth), this protein is Triosephosphate isomerase.